A 231-amino-acid chain; its full sequence is Uridylate kinase (231 aa).

6 to 9 is a binding site for ATP; it reads KLSG. The interval 14 to 19 is involved in allosteric activation by GTP; it reads GEGGRG. ATP-binding residues include glycine 49 and arginine 53. UMP contacts are provided by residues aspartate 66 and 127–134; that span reads TSNPFFTT. ATP is bound by residues threonine 154, tyrosine 160, and aspartate 163.

This sequence belongs to the UMP kinase family. As to quaternary structure, homohexamer.

The protein localises to the cytoplasm. The catalysed reaction is UMP + ATP = UDP + ADP. Its pathway is pyrimidine metabolism; CTP biosynthesis via de novo pathway; UDP from UMP (UMPK route): step 1/1. With respect to regulation, allosterically activated by GTP. Inhibited by UTP. Catalyzes the reversible phosphorylation of UMP to UDP. This chain is Uridylate kinase, found in Thermotoga petrophila (strain ATCC BAA-488 / DSM 13995 / JCM 10881 / RKU-1).